A 370-amino-acid polypeptide reads, in one-letter code: Molybdenum import ATP-binding protein ModC (370 aa).

The 232-residue stretch at 1–232 (MLDIDVLRQQ…PDIPDFAAQR (232 aa)) folds into the ABC transporter domain. ATP is bound at residue 30-37 (GRSGAGKT). Residues 292 to 363 (MVSVQNILAA…IKAMSLLRDE (72 aa)) form the Mop domain.

It belongs to the ABC transporter superfamily. Molybdate importer (TC 3.A.1.8) family. In terms of assembly, the complex is composed of two ATP-binding proteins (ModC), two transmembrane proteins (ModB) and a solute-binding protein (ModA).

It is found in the cell inner membrane. It catalyses the reaction molybdate(out) + ATP + H2O = molybdate(in) + ADP + phosphate + H(+). Its function is as follows. Part of the ABC transporter complex ModABC involved in molybdenum import. Responsible for energy coupling to the transport system. This chain is Molybdenum import ATP-binding protein ModC, found in Rhodospirillum rubrum (strain ATCC 11170 / ATH 1.1.1 / DSM 467 / LMG 4362 / NCIMB 8255 / S1).